Here is a 601-residue protein sequence, read N- to C-terminus: Adenine deaminase (601 aa).

The protein belongs to the metallo-dependent hydrolases superfamily. Adenine deaminase family. Mn(2+) is required as a cofactor.

It catalyses the reaction adenine + H2O + H(+) = hypoxanthine + NH4(+). This is Adenine deaminase from Ruegeria sp. (strain TM1040) (Silicibacter sp.).